We begin with the raw amino-acid sequence, 131 residues long: D-ribose pyranase (131 aa).

The Proton donor role is filled by histidine 20. Substrate-binding positions include aspartate 28, histidine 98, and 120 to 122; that span reads YAN.

Belongs to the RbsD / FucU family. RbsD subfamily. In terms of assembly, homodecamer.

It is found in the cytoplasm. The enzyme catalyses beta-D-ribopyranose = beta-D-ribofuranose. It participates in carbohydrate metabolism; D-ribose degradation; D-ribose 5-phosphate from beta-D-ribopyranose: step 1/2. Its function is as follows. Catalyzes the interconversion of beta-pyran and beta-furan forms of D-ribose. This Enterococcus faecalis (strain ATCC 700802 / V583) protein is D-ribose pyranase.